The sequence spans 105 residues: DNA-directed RNA polymerase subunit omega (105 aa).

It belongs to the RNA polymerase subunit omega family. The RNAP catalytic core consists of 2 alpha, 1 beta, 1 beta' and 1 omega subunit. When a sigma factor is associated with the core the holoenzyme is formed, which can initiate transcription.

The enzyme catalyses RNA(n) + a ribonucleoside 5'-triphosphate = RNA(n+1) + diphosphate. In terms of biological role, promotes RNA polymerase assembly. Latches the N- and C-terminal regions of the beta' subunit thereby facilitating its interaction with the beta and alpha subunits. This chain is DNA-directed RNA polymerase subunit omega, found in Streptococcus equi subsp. zooepidemicus (strain MGCS10565).